Reading from the N-terminus, the 185-residue chain is Stathmin-4 (185 aa).

The SLD domain occupies 48-185; that stretch reads SDMEVIELNK…EVRKNKEATR (138 aa). A coiled-coil region spans residues 90 to 185; that stretch reads SLEEIQKKLE…EVRKNKEATR (96 aa). Positions 165–185 are disordered; it reads ERLQEKDKHAEEVRKNKEATR. Basic and acidic residues predominate over residues 166–185; it reads RLQEKDKHAEEVRKNKEATR.

This sequence belongs to the stathmin family. Nervous tissue.

This Xenopus laevis (African clawed frog) protein is Stathmin-4 (stmn4).